The sequence spans 392 residues: Methylthioribose-1-phosphate isomerase (392 aa).

Asp267 serves as the catalytic Proton donor.

The protein belongs to the eIF-2B alpha/beta/delta subunits family. MtnA subfamily.

It is found in the cytoplasm. It localises to the nucleus. It catalyses the reaction 5-(methylsulfanyl)-alpha-D-ribose 1-phosphate = 5-(methylsulfanyl)-D-ribulose 1-phosphate. The protein operates within amino-acid biosynthesis; L-methionine biosynthesis via salvage pathway; L-methionine from S-methyl-5-thio-alpha-D-ribose 1-phosphate: step 1/6. Its function is as follows. Catalyzes the interconversion of methylthioribose-1-phosphate (MTR-1-P) into methylthioribulose-1-phosphate (MTRu-1-P). In Ajellomyces dermatitidis (strain ER-3 / ATCC MYA-2586) (Blastomyces dermatitidis), this protein is Methylthioribose-1-phosphate isomerase.